The primary structure comprises 209 residues: Large ribosomal subunit protein uL4 (209 aa).

Positions 45 to 80 (RQGTHKAKERSELSGSTRKLIRQKGSGGARRGDINS) are disordered.

This sequence belongs to the universal ribosomal protein uL4 family. As to quaternary structure, part of the 50S ribosomal subunit.

In terms of biological role, one of the primary rRNA binding proteins, this protein initially binds near the 5'-end of the 23S rRNA. It is important during the early stages of 50S assembly. It makes multiple contacts with different domains of the 23S rRNA in the assembled 50S subunit and ribosome. Forms part of the polypeptide exit tunnel. This chain is Large ribosomal subunit protein uL4, found in Porphyromonas gingivalis (strain ATCC BAA-308 / W83).